The primary structure comprises 469 residues: Glutamate--tRNA ligase 1 (469 aa).

The short motif at 11 to 21 (PSPTGHLHLGG) is the 'HIGH' region element. The 'KMSKS' region signature appears at 238–242 (KLSKR). Lys-241 contributes to the ATP binding site.

This sequence belongs to the class-I aminoacyl-tRNA synthetase family. Glutamate--tRNA ligase type 1 subfamily. As to quaternary structure, monomer.

The protein resides in the cytoplasm. The enzyme catalyses tRNA(Glu) + L-glutamate + ATP = L-glutamyl-tRNA(Glu) + AMP + diphosphate. Catalyzes the attachment of glutamate to tRNA(Glu) in a two-step reaction: glutamate is first activated by ATP to form Glu-AMP and then transferred to the acceptor end of tRNA(Glu). In Ehrlichia canis (strain Jake), this protein is Glutamate--tRNA ligase 1.